The chain runs to 781 residues: Probable serine/threonine-protein kinase C70.05c (781 aa).

Disordered regions lie at residues 1-315 (MPSD…PLVS) and 368-417 (YSGK…TNIS). Low complexity predominate over residues 21–31 (ESPSSRSIGSG). The span at 43–63 (FKNSFLSRKNSSQIKSPSDYK) shows a compositional bias: polar residues. Positions 64–73 (SSAHEQRVNH) are enriched in basic and acidic residues. Residues 74–92 (TTDSMAHVPGNNSPLQTPQ) show a composition bias toward polar residues. Ser94 carries the phosphoserine modification. Residues 112–121 (SRHHKPHHSG) are compositionally biased toward basic residues. Polar residues-rich tracts occupy residues 136-146 (SNANSPTSESP), 161-195 (KNTS…PNSR), and 206-228 (NSAS…SLSR). A Phosphoserine modification is found at Ser253. The segment covering 272–304 (PLTASPTPSSPTGTPNSMSKSPSLSSLASTGAS) has biased composition (low complexity). The segment covering 379 to 406 (NVGSSANTAPNSPTSANSSEGNQGNGPT) has biased composition (polar residues). A Protein kinase domain is found at 432–742 (AKRVVPRLSA…AQEALNLPFV (311 aa)). ATP is bound by residues 452 to 460 (MGSGATAVI) and Lys480. Asp584 serves as the catalytic Proton acceptor.

Belongs to the protein kinase superfamily. Ser/Thr protein kinase family.

The protein localises to the cytoplasm. It catalyses the reaction L-seryl-[protein] + ATP = O-phospho-L-seryl-[protein] + ADP + H(+). It carries out the reaction L-threonyl-[protein] + ATP = O-phospho-L-threonyl-[protein] + ADP + H(+). This Schizosaccharomyces pombe (strain 972 / ATCC 24843) (Fission yeast) protein is Probable serine/threonine-protein kinase C70.05c.